The sequence spans 260 residues: Pyridoxine 5'-phosphate synthase (260 aa).

Residue asparagine 15 coordinates 3-amino-2-oxopropyl phosphate. 17–18 (DH) provides a ligand contact to 1-deoxy-D-xylulose 5-phosphate. Residue arginine 26 coordinates 3-amino-2-oxopropyl phosphate. Histidine 51 acts as the Proton acceptor in catalysis. 1-deoxy-D-xylulose 5-phosphate-binding residues include arginine 53 and histidine 58. Glutamate 78 (proton acceptor) is an active-site residue. Threonine 108 lines the 1-deoxy-D-xylulose 5-phosphate pocket. Histidine 199 acts as the Proton donor in catalysis. 3-amino-2-oxopropyl phosphate is bound by residues glycine 200 and 221–222 (GH).

It belongs to the PNP synthase family. Homooctamer; tetramer of dimers.

Its subcellular location is the cytoplasm. The enzyme catalyses 3-amino-2-oxopropyl phosphate + 1-deoxy-D-xylulose 5-phosphate = pyridoxine 5'-phosphate + phosphate + 2 H2O + H(+). The protein operates within cofactor biosynthesis; pyridoxine 5'-phosphate biosynthesis; pyridoxine 5'-phosphate from D-erythrose 4-phosphate: step 5/5. Its function is as follows. Catalyzes the complicated ring closure reaction between the two acyclic compounds 1-deoxy-D-xylulose-5-phosphate (DXP) and 3-amino-2-oxopropyl phosphate (1-amino-acetone-3-phosphate or AAP) to form pyridoxine 5'-phosphate (PNP) and inorganic phosphate. This chain is Pyridoxine 5'-phosphate synthase, found in Cupriavidus metallidurans (strain ATCC 43123 / DSM 2839 / NBRC 102507 / CH34) (Ralstonia metallidurans).